The following is a 319-amino-acid chain: Serine acetyltransferase, plasmid (319 aa).

Belongs to the transferase hexapeptide repeat family.

It localises to the cytoplasm. It catalyses the reaction L-serine + acetyl-CoA = O-acetyl-L-serine + CoA. Its pathway is amino-acid biosynthesis; L-cysteine biosynthesis; L-cysteine from L-serine: step 1/2. This is Serine acetyltransferase, plasmid (srpH) from Synechococcus elongatus (strain ATCC 33912 / PCC 7942 / FACHB-805) (Anacystis nidulans R2).